The primary structure comprises 246 residues: Probable septum site-determining protein MinC (246 aa).

Belongs to the MinC family. As to quaternary structure, interacts with MinD and FtsZ.

In terms of biological role, cell division inhibitor that blocks the formation of polar Z ring septums. Rapidly oscillates between the poles of the cell to destabilize FtsZ filaments that have formed before they mature into polar Z rings. Prevents FtsZ polymerization. This chain is Probable septum site-determining protein MinC, found in Pseudomonas syringae pv. syringae (strain B728a).